We begin with the raw amino-acid sequence, 344 residues long: DNA-directed RNA polymerase subunit alpha (344 aa).

Residues 1–238 form an alpha N-terminal domain (alpha-NTD) region; sequence MKVIKTAPLI…KQLGVFGERP (238 aa). The interval 254–344 is alpha C-terminal domain (alpha-CTD); the sequence is AKDLSAKIES…EKLEDKGGND (91 aa).

The protein belongs to the RNA polymerase alpha chain family. As to quaternary structure, homodimer. The RNAP catalytic core consists of 2 alpha, 1 beta, 1 beta' and 1 omega subunit. When a sigma factor is associated with the core the holoenzyme is formed, which can initiate transcription.

The enzyme catalyses RNA(n) + a ribonucleoside 5'-triphosphate = RNA(n+1) + diphosphate. In terms of biological role, DNA-dependent RNA polymerase catalyzes the transcription of DNA into RNA using the four ribonucleoside triphosphates as substrates. In Helicobacter pylori (strain J99 / ATCC 700824) (Campylobacter pylori J99), this protein is DNA-directed RNA polymerase subunit alpha.